The sequence spans 336 residues: Structure-specific endonuclease subunit SLX1 (336 aa).

The GIY-YIG domain maps to 21-104; sequence SFYGVYLLQS…QHCHETRHIK (84 aa). Positions 37 to 57 are disordered; sequence FYIGSTPDPPRRLRQHNGDLK. The SLX1-type zinc finger occupies 214–290; sequence CALCLEPIEQ…PATVNRCCSC (77 aa).

Belongs to the SLX1 family. As to quaternary structure, forms a heterodimer with SLX4. The cofactor is a divalent metal cation.

Its subcellular location is the nucleus. Its function is as follows. Catalytic subunit of the SLX1-SLX4 structure-specific endonuclease that resolves DNA secondary structures generated during DNA repair and recombination. Has endonuclease activity towards branched DNA substrates, introducing single-strand cuts in duplex DNA close to junctions with ss-DNA. This Scheffersomyces stipitis (strain ATCC 58785 / CBS 6054 / NBRC 10063 / NRRL Y-11545) (Yeast) protein is Structure-specific endonuclease subunit SLX1.